The chain runs to 751 residues: Leucine-rich repeat-containing protein 56 homolog (751 aa).

Residues M1–L149 form a disordered region. A compositionally biased stretch (pro residues) spans G13–P22. 2 stretches are compositionally biased toward polar residues: residues R28–R39 and H60–S87. LRR repeat units lie at residues M210 to N235, L236 to A256, V258 to S279, S280 to Q304, and K307 to S328. Disordered stretches follow at residues S430 to Q538, T645 to W698, and E717 to F751. 2 stretches are compositionally biased toward polar residues: residues K456 to G471 and Q662 to A671. Residues E717–V738 show a composition bias toward basic and acidic residues. A compositionally biased stretch (acidic residues) spans E739 to F751.

The protein belongs to the LRRC56 family.

Its subcellular location is the cell projection. It localises to the cilium. The protein resides in the flagellum. Its function is as follows. Required for the assembly of dynein arms in the distal portion of flagellum axoneme. This is Leucine-rich repeat-containing protein 56 homolog from Trypanosoma brucei brucei (strain 927/4 GUTat10.1).